The following is a 231-amino-acid chain: Class II histocompatibility antigen, B-L beta chain (231 aa).

Residues 1–89 (FFQWSATVEC…IVAPLTLQRR (89 aa)) form a beta-1 region. Topologically, residues 1-194 (FFQWSATVEC…PGDVSRSKLL (194 aa)) are extracellular. Disulfide bonds link Cys-10/Cys-74 and Cys-111/Cys-167. An N-linked (GlcNAc...) asparagine glycan is attached at Asn-14. Residues 90-182 (EPKVRIFALQ…SLQQPITQRW (93 aa)) form a beta-2 region. In terms of domain architecture, Ig-like C1-type spans 91–179 (PKVRIFALQS…EHTSLQQPIT (89 aa)). Residues 183 to 194 (EPPGDVSRSKLL) form a connecting peptide region. The helical transmembrane segment at 195-219 (MGVGGFVLGLVYLALGIFFFLCSKK) threads the bilayer. Residues 220–231 (GQPDPTSPGILN) are Cytoplasmic-facing.

This sequence belongs to the MHC class II family.

The protein resides in the membrane. The chain is Class II histocompatibility antigen, B-L beta chain from Gallus gallus (Chicken).